The following is a 705-amino-acid chain: Rab guanine nucleotide exchange factor sec2 (705 aa).

A coiled-coil region spans residues 144 to 285; it reads QTTLDDNLVA…KSVMQGMNIA (142 aa).

It belongs to the SEC2 family.

Guanine nucleotide exchange factor that plays an important role in regulating the growth and virulence, probably by regulating the autophagy pathway. Affects the sensitivity to cell wall disruptors and the cell wall thickness by regulating the expression levels of the cell wall integrity (CWI) pathway genes, thus coordinating the growth and virulence. Positively regulates the autophagy pathway to enhance the expression of CWI pathway genes in the presence of autophagy inducers. The polypeptide is Rab guanine nucleotide exchange factor sec2 (Aspergillus fumigatus (strain ATCC MYA-4609 / CBS 101355 / FGSC A1100 / Af293) (Neosartorya fumigata)).